Here is a 66-residue protein sequence, read N- to C-terminus: U-limacoditoxin(59)-Dv128 (66 aa).

Positions 1-20 are cleaved as a signal peptide; the sequence is MRHLLVLLLICLSVIAMAQA. The segment at 21 to 66 is 3 X 16 AA tandem repeats of [FI]-G-G-G-L-G-G-A-V-G-G-R-R-R-R-D; that stretch reads TFGGGLGGAVGGRRRRDIGGGLGGAVGGRRRRDIGGGLGGAVGGKS. 2 tandem repeats follow at residues 22–37 and 38–53. Gly-31 carries the post-translational modification Glycine amide. Residues 33–37 constitute a propeptide that is removed on maturation; the sequence is RRRRD. Gly-47 carries the post-translational modification Glycine amide. The propeptide occupies 49–53; it reads RRRRD. The 3; half-length repeat unit spans residues 54–64; sequence IGGGLGGAVGG.

It belongs to the limacoditoxin-59 family. In terms of tissue distribution, expressed by the venom secretory cell of the spine. The spine is a cuticular structure containing a single large nucleated venom-secreting cell at its base. It is an independent unit capable of producing, storing and injecting venom. On the back of D.vulnerans caterpillars, spines are grouped together by 50 to 100 to form scoli, of which there are eight in D.vulnerans.

The protein localises to the secreted. Its function is as follows. Probable toxin. In Doratifera vulnerans (Mottled cup moth), this protein is U-limacoditoxin(59)-Dv128.